We begin with the raw amino-acid sequence, 89 residues long: Putative protein p54 (89 aa).

The chain is Putative protein p54 (54) from Acyrthosiphon pisum secondary endosymbiont phage 1 (Bacteriophage APSE-1).